Here is a 129-residue protein sequence, read N- to C-terminus: UPF0102 protein CT2262 (129 aa).

Belongs to the UPF0102 family.

This Chlorobaculum tepidum (strain ATCC 49652 / DSM 12025 / NBRC 103806 / TLS) (Chlorobium tepidum) protein is UPF0102 protein CT2262.